We begin with the raw amino-acid sequence, 80 residues long: Small ribosomal subunit protein bS18 (80 aa).

Belongs to the bacterial ribosomal protein bS18 family. As to quaternary structure, part of the 30S ribosomal subunit. Forms a tight heterodimer with protein bS6.

Binds as a heterodimer with protein bS6 to the central domain of the 16S rRNA, where it helps stabilize the platform of the 30S subunit. The sequence is that of Small ribosomal subunit protein bS18 from Acholeplasma laidlawii (strain PG-8A).